The following is an 860-amino-acid chain: MANDQEMSGWTDLLHSSTKLLEQAAPSSQFPPLQRNLDQLEALSRKLKAKTLRNEAPSQSIAATRLLAREGINADQLSRDLKSFELKTTFEDVFPAETTSVEEYLQQVHEMAMVSAIQEAQKDNVRSFNNYMLKVLEEDCIKEKRDFLHSLSKTSMLPKTKMINSSRGSHAGSLVPLSPQVSSKPGTELVSMTNKPIHEKKAYVYAEVVKKLNSARERGLPFKLATLFNGAYESLEIDLTRGKSVNMQKLWQLIQGMTGEESAVQHGVSKRMALVIGARRHLECGHGKHIMDTIQSHPTQAALGGSVGNLQRIRAFLRIRLRDYGSLDFDSVDARRQPPVDTTWQQIYFCLRTGYYEEAREIAQSSRSSQQQFAPLLTEWITTGGTVAAQTAATASEECEKLLRMGDRFGQTTYDKKKLLLYTIISGSRRQIDRIMRDFSTLFNTIEDFLWFKLSCVRDVAGGSSSMIVNDGLVPYSLDDLQAYLNKFEPSYYTKNGKDPLVYPYVLLLSIQLLPAIMHMSNEAGDEGYNIDAVHVAISLVDHSILSEGSGTGRKLSVMDANAEASSMIRQYGSMYLHHGDLQMTLEYYAQAAIAVGGGQQAWSGRSNVDQQRQRNLMLKQLLTEILSQEDGIHFLLGARGSGEEGELGRFLPDIKLRQQFLIEAAHQFQEAGLYDKSIELQKRVGAFSSALETINKCLSEAICSLVRGRPDGESRTEGLVLSGNDILNSYKYHPDVSAQERHLVMEQETILRELEAILSIHKLARLNKHLDAIREVAKLPFLHLDPRQPDTTSDEFQKASSYFQTCVPDLLKVALTCLDNVADTDGSIRGMRSKIAGFLASNTQRNWPRDLYEKIARSF.

The protein belongs to the nucleoporin interacting component (NIC) family. Part of the nuclear pore complex (NPC). The NPC has an eight-fold symmetrical structure comprising a central transport channel and two rings, the cytoplasmic and nuclear rings, to which eight filaments are attached. The cytoplasmic filaments have loose ends, while the nuclear filaments are joined in a distal ring, forming a nuclear basket. NPCs are highly dynamic in configuration and composition, and can be devided in 3 subcomplexes, the NUP62 subcomplex, the NUP107-160 subcomplex and the NUP93 subcomplex, containing approximately 30 different nucleoporin proteins.

The protein resides in the nucleus envelope. Its subcellular location is the nucleus. It localises to the nuclear pore complex. This chain is Nuclear pore complex protein NUP93B, found in Arabidopsis thaliana (Mouse-ear cress).